Here is a 342-residue protein sequence, read N- to C-terminus: MAGSGGLGGGAGGGQGAGAGQGAALRASRAPMLLVALVLGAYCLCALPGRCPPAARAPAPAPAPSEPSSSVHRPGAPGLPLASGPGRRRFPQALIVGVKKGGTRALLEFLRLHPDVRALGSEPHFFDRCYERGLAWYRSLMPRTLDGQITMEKTPSYFVTREAPRRIHAMSPDTKLIVVVRNPVTRAISDYAQTLSKTPGLPSFRALAFRHGLGPVDTAWSAVRIGLYAQHLDHWLRYFPLSHFLFVSGERLVSDPAGEVGRVQDFLGLKRVVTDKHFYFNATKGFPCLKKAQGGSRPRCLGKSKGRPHPRVPQALVRRLQEFYRPFNRRFYQMTGQDFGWG.

Residues Met1–Gln21 are disordered. Residues Met1–Pro31 are Cytoplasmic-facing. Residues Met32–Gly49 form a helical; Signal-anchor for type II membrane protein membrane-spanning segment. At Arg50–Gly342 the chain is on the lumenal side. Positions Ala55–Pro85 are disordered. A compositionally biased stretch (low complexity) spans Glu66–Pro85. A 3'-phosphoadenylyl sulfate-binding site is contributed by Lys100–Arg104. Substrate is bound by residues Glu122–Arg128 and Lys153–Ser156. 2 residues coordinate 3'-phosphoadenylyl sulfate: Arg181 and Ser189. Trp220–Ser221 serves as a coordination point for substrate. N-linked (GlcNAc...) asparagine glycosylation is present at Asn281. The cysteines at positions 288 and 300 are disulfide-linked. Lys305–His309 provides a ligand contact to 3'-phosphoadenylyl sulfate.

The protein belongs to the sulfotransferase 1 family.

It is found in the golgi apparatus membrane. It carries out the reaction alpha-D-glucosaminyl-[heparan sulfate](n) + 3'-phosphoadenylyl sulfate = 3-sulfo-alpha-D-glucosaminyl-[heparan sulfate](n) + adenosine 3',5'-bisphosphate + H(+). Sulfotransferase that utilizes 3'-phospho-5'-adenylyl sulfate (PAPS) to catalyze the transfer of a sulfo group to heparan sulfate. The substrate-specific O-sulfation generates an enzyme-modified heparan sulfate which acts as a binding receptor to Herpes Simplex Virus-1 (HSV-1) and permits its entry. Unlike 3-OST-1, does not convert non-anticoagulant heparan sulfate to anticoagulant heparan sulfate. The chain is Heparan sulfate glucosamine 3-O-sulfotransferase 6 (HS3ST6) from Homo sapiens (Human).